Consider the following 97-residue polypeptide: MSRKCDLTGVGVLYGNNVSHSQRKTRRRFEPNLRSVKFKSDITSGAYRLLVNARCISSVEKAGGFDAYILKADDNVLSSAARAIKKKIIQTKTAKSL.

It belongs to the bacterial ribosomal protein bL28 family.

The sequence is that of Large ribosomal subunit protein bL28 from Rickettsia canadensis (strain McKiel).